We begin with the raw amino-acid sequence, 349 residues long: Ribosomal RNA small subunit methyltransferase H (349 aa).

S-adenosyl-L-methionine is bound by residues 34-36 (GGH), Asp-54, Phe-81, Asp-102, and Gln-109. Residues 328–349 (SRTGSVQHGQAKHKGVVQRGGS) form a disordered region.

Belongs to the methyltransferase superfamily. RsmH family.

The protein localises to the cytoplasm. It catalyses the reaction cytidine(1402) in 16S rRNA + S-adenosyl-L-methionine = N(4)-methylcytidine(1402) in 16S rRNA + S-adenosyl-L-homocysteine + H(+). Specifically methylates the N4 position of cytidine in position 1402 (C1402) of 16S rRNA. This is Ribosomal RNA small subunit methyltransferase H from Dehalococcoides mccartyi (strain ATCC BAA-2100 / JCM 16839 / KCTC 5957 / BAV1).